Here is a 121-residue protein sequence, read N- to C-terminus: Large ribosomal subunit protein uL18 (121 aa).

A compositionally biased stretch (basic residues) spans methionine 1–alanine 19. The disordered stretch occupies residues methionine 1–glycine 23.

This sequence belongs to the universal ribosomal protein uL18 family. In terms of assembly, part of the 50S ribosomal subunit; part of the 5S rRNA/L5/L18/L25 subcomplex. Contacts the 5S and 23S rRNAs.

This is one of the proteins that bind and probably mediate the attachment of the 5S RNA into the large ribosomal subunit, where it forms part of the central protuberance. This chain is Large ribosomal subunit protein uL18, found in Syntrophus aciditrophicus (strain SB).